A 353-amino-acid polypeptide reads, in one-letter code: uncharacterized protein (353 aa).

This is an uncharacterized protein from Archaeoglobus fulgidus (strain ATCC 49558 / DSM 4304 / JCM 9628 / NBRC 100126 / VC-16).